A 192-amino-acid polypeptide reads, in one-letter code: Elongation factor P (192 aa).

It belongs to the elongation factor P family.

The protein localises to the cytoplasm. Its pathway is protein biosynthesis; polypeptide chain elongation. In terms of biological role, involved in peptide bond synthesis. Stimulates efficient translation and peptide-bond synthesis on native or reconstituted 70S ribosomes in vitro. Probably functions indirectly by altering the affinity of the ribosome for aminoacyl-tRNA, thus increasing their reactivity as acceptors for peptidyl transferase. The polypeptide is Elongation factor P (Borrelia turicatae (strain 91E135)).